The following is a 203-amino-acid chain: Small ribosomal subunit protein uS4c (203 aa).

Residues 92 to 150 (MRLDNIIYRLGMAPTIANARQLVNHGHIVVNDRIVTIPSYRCKPKDIISVRNNSTSRNV) enclose the S4 RNA-binding domain.

The protein belongs to the universal ribosomal protein uS4 family. In terms of assembly, part of the 30S ribosomal subunit. Contacts protein S5. The interaction surface between S4 and S5 is involved in control of translational fidelity.

The protein localises to the plastid. It localises to the chloroplast. In terms of biological role, one of the primary rRNA binding proteins, it binds directly to 16S rRNA where it nucleates assembly of the body of the 30S subunit. With S5 and S12 plays an important role in translational accuracy. This is Small ribosomal subunit protein uS4c (rps4) from Chlorokybus atmophyticus (Soil alga).